The chain runs to 785 residues: Hyperosmolality-gated Ca2+ permeable channel 1.7 (785 aa).

Residues Ile-7–Met-27 form a helical membrane-spanning segment. At Ser-54 the chain carries Phosphoserine. Transmembrane regions (helical) follow at residues Ile-101–Val-121, Phe-156–Met-176, Leu-373–Val-393, Phe-425–Met-445, Tyr-465–Gln-485, Ala-510–Leu-530, Ala-582–Phe-602, Leu-628–Phe-648, and Val-651–Gly-671. The disordered stretch occupies residues Val-725–Asn-761. Polar residues predominate over residues Thr-739 to Asn-761.

This sequence belongs to the CSC1 (TC 1.A.17) family. Phosphorylated and activated by BIK1.

The protein localises to the membrane. The enzyme catalyses Ca(2+)(in) = Ca(2+)(out). Calcium-permeable channel involved in plant stomatal immunity. The polypeptide is Hyperosmolality-gated Ca2+ permeable channel 1.7 (Arabidopsis thaliana (Mouse-ear cress)).